A 521-amino-acid polypeptide reads, in one-letter code: UDP-N-acetylmuramoyl-L-alanyl-D-glutamate--2,6-diaminopimelate ligase (521 aa).

A UDP-N-acetyl-alpha-D-muramoyl-L-alanyl-D-glutamate-binding site is contributed by Ser33. An ATP-binding site is contributed by Gly116–Thr122. Residues Thr158 to Thr159, Ser185, Gln191, and Arg193 each bind UDP-N-acetyl-alpha-D-muramoyl-L-alanyl-D-glutamate. Lys225 is modified (N6-carboxylysine). Meso-2,6-diaminopimelate is bound by residues Arg409, Asp433–Arg436, Gly483, and Glu487. The Meso-diaminopimelate recognition motif motif lies at Asp433–Arg436.

It belongs to the MurCDEF family. MurE subfamily. Mg(2+) serves as cofactor. In terms of processing, carboxylation is probably crucial for Mg(2+) binding and, consequently, for the gamma-phosphate positioning of ATP.

The protein localises to the cytoplasm. The catalysed reaction is UDP-N-acetyl-alpha-D-muramoyl-L-alanyl-D-glutamate + meso-2,6-diaminopimelate + ATP = UDP-N-acetyl-alpha-D-muramoyl-L-alanyl-gamma-D-glutamyl-meso-2,6-diaminopimelate + ADP + phosphate + H(+). It participates in cell wall biogenesis; peptidoglycan biosynthesis. In terms of biological role, catalyzes the addition of meso-diaminopimelic acid to the nucleotide precursor UDP-N-acetylmuramoyl-L-alanyl-D-glutamate (UMAG) in the biosynthesis of bacterial cell-wall peptidoglycan. This Nitrosomonas europaea (strain ATCC 19718 / CIP 103999 / KCTC 2705 / NBRC 14298) protein is UDP-N-acetylmuramoyl-L-alanyl-D-glutamate--2,6-diaminopimelate ligase.